The chain runs to 876 residues: MKKLKASEIRQKYLDFFVEKGHMVEPSAPLVPIDDDTLLWINSGVATLKKYFDGRETPKKPRIVNSQKAIRTNDIENVGFTARHHTFFEMLGNFSIGDYFKQEAIEFAWEFLTSDKWMGMEPDKLYVTIHPEDMEAYNIWHKDIGLEESRIIRIEGNFWDIGEGPSGPNTEIFYDRGEAYGQDDPAEEMYPGGENERYLEVWNLVFSEFNHNKDHSYTPLPNKNIDTGMGLERMASVSQNVRTNYETDLFMPIMNEIEKVSGKQYLVNNEQDVAFKVIADHIRTIAFAISDGALPANEGRGYVLRRLLRRAVRFSQTLGINEPFMYKLVDIVADIMEPYYPNVKEKADFIKRVIKSEEERFHETLEDGLAILNELIKKAKATTNEINGKDAFKLYDTYGFPIELTEEIAVQAGLKVDMTTFESEMQQQRDRARQARQNSQSMQVQSEVLKNITSASTFVGYDTATAQTTLTHLIYNGEEVSQVEAGETVYFMLTETPFYAISGGQVADTGIVYNDNFEIAVSEVTKAPNGQNLHKGVVQFGQVNVGATVSAEVNQNDRRDIQKNHSATHLLHAALKSVLGDHVNQAGSLVEADRLRFDFSHFGPMTNDEIDQVERLVNEEIWKGIDVNIQEMDIASAKEMGAMALFGEKYGDVVRVVNMAPFSIELCGGIHVRNTSEIGLFKIVSESGTGAGVRRIEALTGKAAFLYLEDIQEKFNTMKSQLKVKSDDQVVDKLTQLQDEEKALLKQLEQRDKEITSLKMGNIEDQVEEINGYKVLVTEVDVPNAKAIRSTMDDFKSKLQDTIIILASNVDDKVSMVATVPKSLTNNVKAGDLIKQMAPIVGGKGGGRPDMAQGGGTQPENISKSLSFIKDYIKNL.

Zn(2+)-binding residues include His-565, His-569, Cys-667, and His-671.

This sequence belongs to the class-II aminoacyl-tRNA synthetase family. Zn(2+) serves as cofactor.

The protein localises to the cytoplasm. The enzyme catalyses tRNA(Ala) + L-alanine + ATP = L-alanyl-tRNA(Ala) + AMP + diphosphate. Functionally, catalyzes the attachment of alanine to tRNA(Ala) in a two-step reaction: alanine is first activated by ATP to form Ala-AMP and then transferred to the acceptor end of tRNA(Ala). Also edits incorrectly charged Ser-tRNA(Ala) and Gly-tRNA(Ala) via its editing domain. The chain is Alanine--tRNA ligase from Staphylococcus aureus (strain USA300).